A 235-amino-acid chain; its full sequence is Small ribosomal subunit protein uS3 (235 aa).

In terms of domain architecture, KH type-2 spans 39-107 (VRLFLRKELF…PTQINIAEIR (69 aa)).

This sequence belongs to the universal ribosomal protein uS3 family. In terms of assembly, part of the 30S ribosomal subunit. Forms a tight complex with proteins S10 and S14.

Its function is as follows. Binds the lower part of the 30S subunit head. Binds mRNA in the 70S ribosome, positioning it for translation. This is Small ribosomal subunit protein uS3 from Buchnera aphidicola subsp. Baizongia pistaciae (strain Bp).